Here is a 351-residue protein sequence, read N- to C-terminus: Putative phospho-N-acetylmuramoyl-pentapeptide-transferase (351 aa).

The next 10 membrane-spanning stretches (helical) occupy residues methionine 2–isoleucine 22, alanine 44–leucine 64, leucine 71–leucine 91, glycine 158–glycine 178, glycine 181–isoleucine 201, glycine 212–serine 232, alanine 235–proline 255, isoleucine 258–leucine 278, threonine 281–leucine 301, and isoleucine 328–glycine 348.

It belongs to the glycosyltransferase 4 family. MraY subfamily. Mg(2+) is required as a cofactor.

It localises to the cell membrane. It carries out the reaction UDP-N-acetyl-alpha-D-muramoyl-L-alanyl-gamma-D-glutamyl-meso-2,6-diaminopimeloyl-D-alanyl-D-alanine + di-trans,octa-cis-undecaprenyl phosphate = di-trans,octa-cis-undecaprenyl diphospho-N-acetyl-alpha-D-muramoyl-L-alanyl-D-glutamyl-meso-2,6-diaminopimeloyl-D-alanyl-D-alanine + UMP. This Methanothermobacter thermautotrophicus (strain ATCC 29096 / DSM 1053 / JCM 10044 / NBRC 100330 / Delta H) (Methanobacterium thermoautotrophicum) protein is Putative phospho-N-acetylmuramoyl-pentapeptide-transferase.